A 352-amino-acid chain; its full sequence is Threonine synthase (352 aa).

Lysine 59 carries the N6-(pyridoxal phosphate)lysine modification. Pyridoxal 5'-phosphate contacts are provided by residues asparagine 85, 185–189 (GNAGN), and threonine 314.

It belongs to the threonine synthase family. Requires pyridoxal 5'-phosphate as cofactor.

The enzyme catalyses O-phospho-L-homoserine + H2O = L-threonine + phosphate. It participates in amino-acid biosynthesis; L-threonine biosynthesis; L-threonine from L-aspartate: step 5/5. Its function is as follows. Catalyzes the gamma-elimination of phosphate from L-phosphohomoserine and the beta-addition of water to produce L-threonine. The chain is Threonine synthase (thrC) from Bacillus sp. (strain ULM1).